A 513-amino-acid polypeptide reads, in one-letter code: Aspartic proteinase A2 (513 aa).

The signal sequence occupies residues 1-24 (MGVYSRAVAFSVFVSFLLFFTAYS). A propeptide spans 25 to 71 (KRNDGTFRVGLKKLKLDPNNRLATRFGSKQEEALRSSLRSYNNNLGG) (activation peptide). The Peptidase A1 domain occupies 89 to 510 (YYGEIAIGTP…DFGNEQVGFA (422 aa)). Asp-107 is a catalytic residue. Cystine bridges form between Cys-120–Cys-126 and Cys-285–Cys-289. Asp-294 is a catalytic residue. The Saposin B-type domain maps to 319–424 (VVSQQCKTVV…NEICERMPSP (106 aa)). 4 disulfide bridges follow: Cys-324–Cys-418, Cys-349–Cys-390, Cys-355–Cys-387, and Cys-432–Cys-469. Asn-404 carries N-linked (GlcNAc...) asparagine glycosylation.

Belongs to the peptidase A1 family. In terms of tissue distribution, expressed in seed pods and dry seeds.

The protein resides in the vacuole. Functionally, involved in the breakdown of propeptides of storage proteins in protein-storage vacuoles. The polypeptide is Aspartic proteinase A2 (APA2) (Arabidopsis thaliana (Mouse-ear cress)).